Reading from the N-terminus, the 446-residue chain is Probable beta-1,4-xylosyltransferase IRX9L (446 aa).

A disordered region spans residues 1-26 (MSRRNAGAMQREGSVKDWEEFDPSPS). The Cytoplasmic segment spans residues 1–85 (MSRRNAGAMQ…SRSKGMSLKR (85 aa)). Residues 86-106 (AMLQLLVCFMVGIFIGFTPPF) traverse the membrane as a helical; Signal-anchor for type II membrane protein segment. Residues 107–446 (SVDLPGKIAS…RNLDAVVPIT (340 aa)) lie on the Lumenal side of the membrane. Asn-185, Asn-258, Asn-361, and Asn-411 each carry an N-linked (GlcNAc...) asparagine glycan.

It belongs to the glycosyltransferase 43 family.

The protein localises to the golgi apparatus membrane. Functionally, probable beta-1,4-xylosyltransferase involved in xylan biosynthesis in cell walls. This Oryza sativa subsp. japonica (Rice) protein is Probable beta-1,4-xylosyltransferase IRX9L.